The chain runs to 328 residues: Mitochondrial thiamine pyrophosphate carrier 1 (328 aa).

Solcar repeat units follow at residues 12 to 110, 120 to 208, and 221 to 316; these read GTRR…TTQL, PQPI…LRPV, and PPGS…ALKL. Transmembrane regions (helical) follow at residues 17 to 37, 79 to 99, 126 to 146, 185 to 205, 227 to 247, and 291 to 308; these read VVLA…PLDV, LTGL…YGGI, FISG…LDLL, SAAV…YEAL, AAAG…LDLV, and GLTV…VTMW.

The protein belongs to the mitochondrial carrier (TC 2.A.29) family.

It is found in the mitochondrion inner membrane. Mitochondrial transporter that mediates uptake of thiamine pyrophosphate (ThPP) into mitochondria. The polypeptide is Mitochondrial thiamine pyrophosphate carrier 1 (tpc1) (Emericella nidulans (strain FGSC A4 / ATCC 38163 / CBS 112.46 / NRRL 194 / M139) (Aspergillus nidulans)).